Consider the following 396-residue polypeptide: Elongation factor Tu (396 aa).

The 197-residue stretch at 10–206 (KPHCNIGTIG…AVDSYIPQPE (197 aa)) folds into the tr-type G domain. Residues 19 to 26 (GHVDHGKT) form a G1 region. GTP is bound at residue 19–26 (GHVDHGKT). Residue Thr26 participates in Mg(2+) binding. Positions 60–64 (GITIS) are G2. The segment at 81-84 (DCPG) is G3. Residues 81–85 (DCPGH) and 136–139 (NKVD) contribute to the GTP site. A G4 region spans residues 136–139 (NKVD). A G5 region spans residues 174-176 (SAV).

Belongs to the TRAFAC class translation factor GTPase superfamily. Classic translation factor GTPase family. EF-Tu/EF-1A subfamily. In terms of assembly, monomer.

Its subcellular location is the cytoplasm. The enzyme catalyses GTP + H2O = GDP + phosphate + H(+). Functionally, GTP hydrolase that promotes the GTP-dependent binding of aminoacyl-tRNA to the A-site of ribosomes during protein biosynthesis. The chain is Elongation factor Tu from Rhizorhabdus wittichii (strain DSM 6014 / CCUG 31198 / JCM 15750 / NBRC 105917 / EY 4224 / RW1) (Sphingomonas wittichii).